We begin with the raw amino-acid sequence, 178 residues long: Endothelin-2 (178 aa).

The signal sequence occupies residues 1-24; the sequence is MPAPGVHHPNTASPFLKTVAAGKG. A propeptide spanning residues 25–46 is cleaved from the precursor; sequence QVAAAPEHPAPSARARGSHLRP. Disulfide bonds link Cys-49/Cys-63 and Cys-51/Cys-59. Residues 70 to 178 constitute a propeptide that is removed on maturation; that stretch reads VNTPGQTAPY…RPTHPRRRKR (109 aa). The tract at residues 96-111 is endothelin-like; the sequence is CECSSGGDPACATFCH. The tract at residues 156–178 is disordered; that stretch reads RFPRRPQEAGRQLRPTHPRRRKR. Residues 169–178 show a composition bias toward basic residues; sequence RPTHPRRRKR.

This sequence belongs to the endothelin/sarafotoxin family.

The protein localises to the secreted. Endothelins are endothelium-derived vasoconstrictor peptides. The sequence is that of Endothelin-2 (EDN2) from Canis lupus familiaris (Dog).